A 171-amino-acid chain; its full sequence is Endoribonuclease YbeY (171 aa).

Residues His130, His134, and His140 each coordinate Zn(2+).

This sequence belongs to the endoribonuclease YbeY family. Zn(2+) serves as cofactor.

The protein localises to the cytoplasm. Single strand-specific metallo-endoribonuclease involved in late-stage 70S ribosome quality control and in maturation of the 3' terminus of the 16S rRNA. The protein is Endoribonuclease YbeY of Neisseria meningitidis serogroup C / serotype 2a (strain ATCC 700532 / DSM 15464 / FAM18).